A 109-amino-acid polypeptide reads, in one-letter code: Nucleoid-associated protein Bcer98_0019 (109 aa).

Belongs to the YbaB/EbfC family. In terms of assembly, homodimer.

It is found in the cytoplasm. It localises to the nucleoid. Functionally, binds to DNA and alters its conformation. May be involved in regulation of gene expression, nucleoid organization and DNA protection. This Bacillus cytotoxicus (strain DSM 22905 / CIP 110041 / 391-98 / NVH 391-98) protein is Nucleoid-associated protein Bcer98_0019.